The sequence spans 95 residues: Acylphosphatase (95 aa).

The region spanning 5 to 93 (RAHVFIRGKV…GEFKDFKILP (89 aa)) is the Acylphosphatase-like domain. Residues arginine 20 and asparagine 38 contribute to the active site.

Belongs to the acylphosphatase family.

It catalyses the reaction an acyl phosphate + H2O = a carboxylate + phosphate + H(+). This chain is Acylphosphatase (acyP), found in Pyrobaculum aerophilum (strain ATCC 51768 / DSM 7523 / JCM 9630 / CIP 104966 / NBRC 100827 / IM2).